We begin with the raw amino-acid sequence, 47 residues long: Large ribosomal subunit protein bL36A (47 aa).

This sequence belongs to the bacterial ribosomal protein bL36 family.

This chain is Large ribosomal subunit protein bL36A, found in Yersinia enterocolitica serotype O:8 / biotype 1B (strain NCTC 13174 / 8081).